A 321-amino-acid polypeptide reads, in one-letter code: Lipoyl synthase (321 aa).

[4Fe-4S] cluster contacts are provided by Cys-68, Cys-73, Cys-79, Cys-94, Cys-98, Cys-101, and Ser-308. In terms of domain architecture, Radical SAM core spans 80-297; the sequence is FNHGTATFMI…KDYAEEIGFT (218 aa).

The protein belongs to the radical SAM superfamily. Lipoyl synthase family. [4Fe-4S] cluster serves as cofactor.

Its subcellular location is the cytoplasm. It carries out the reaction [[Fe-S] cluster scaffold protein carrying a second [4Fe-4S](2+) cluster] + N(6)-octanoyl-L-lysyl-[protein] + 2 oxidized [2Fe-2S]-[ferredoxin] + 2 S-adenosyl-L-methionine + 4 H(+) = [[Fe-S] cluster scaffold protein] + N(6)-[(R)-dihydrolipoyl]-L-lysyl-[protein] + 4 Fe(3+) + 2 hydrogen sulfide + 2 5'-deoxyadenosine + 2 L-methionine + 2 reduced [2Fe-2S]-[ferredoxin]. Its pathway is protein modification; protein lipoylation via endogenous pathway; protein N(6)-(lipoyl)lysine from octanoyl-[acyl-carrier-protein]: step 2/2. Catalyzes the radical-mediated insertion of two sulfur atoms into the C-6 and C-8 positions of the octanoyl moiety bound to the lipoyl domains of lipoate-dependent enzymes, thereby converting the octanoylated domains into lipoylated derivatives. The chain is Lipoyl synthase from Shewanella loihica (strain ATCC BAA-1088 / PV-4).